A 335-amino-acid chain; its full sequence is Anthranilate phosphoribosyltransferase (335 aa).

Residues glycine 79, 82-83, serine 87, 89-92, 107-115, and serine 119 contribute to the 5-phospho-alpha-D-ribose 1-diphosphate site; these read GD, NIST, and KHGNRSITS. Glycine 79 provides a ligand contact to anthranilate. Serine 91 lines the Mg(2+) pocket. Position 110 (asparagine 110) interacts with anthranilate. Arginine 165 contacts anthranilate. 2 residues coordinate Mg(2+): aspartate 224 and glutamate 225.

Belongs to the anthranilate phosphoribosyltransferase family. In terms of assembly, homodimer. The cofactor is Mg(2+).

The enzyme catalyses N-(5-phospho-beta-D-ribosyl)anthranilate + diphosphate = 5-phospho-alpha-D-ribose 1-diphosphate + anthranilate. Its pathway is amino-acid biosynthesis; L-tryptophan biosynthesis; L-tryptophan from chorismate: step 2/5. Catalyzes the transfer of the phosphoribosyl group of 5-phosphorylribose-1-pyrophosphate (PRPP) to anthranilate to yield N-(5'-phosphoribosyl)-anthranilate (PRA). The polypeptide is Anthranilate phosphoribosyltransferase (Lactococcus lactis subsp. cremoris (strain SK11)).